The sequence spans 412 residues: Hyaluronidase-3 (412 aa).

Positions 1–22 are cleaved as a signal peptide; the sequence is MITQLGLTLVVGLTLCLVHVQA. 5 disulfide bridges follow: cysteine 42–cysteine 332, cysteine 206–cysteine 221, cysteine 357–cysteine 368, cysteine 362–cysteine 396, and cysteine 398–cysteine 407. Asparagine 69 carries an N-linked (GlcNAc...) asparagine glycan. Catalysis depends on glutamate 129, which acts as the Proton donor. An N-linked (GlcNAc...) asparagine glycan is attached at asparagine 216. The 56-residue stretch at 353–408 folds into the EGF-like domain; sequence AATACSHQRCHGHGRCSWKDPGQMEAFLHLQPDDNLGAWKSFRCRCYLGWSGPTCL.

It belongs to the glycosyl hydrolase 56 family. N-glycosylated.

The protein resides in the secreted. It is found in the cell membrane. Its subcellular location is the cytoplasmic vesicle. The protein localises to the secretory vesicle. It localises to the acrosome. The protein resides in the endoplasmic reticulum. It is found in the early endosome. The catalysed reaction is Random hydrolysis of (1-&gt;4)-linkages between N-acetyl-beta-D-glucosamine and D-glucuronate residues in hyaluronate.. In terms of biological role, facilitates sperm penetration into the layer of cumulus cells surrounding the egg by digesting hyaluronic acid. Involved in induction of the acrosome reaction in the sperm. Involved in follicular atresia, the breakdown of immature ovarian follicles that are not selected to ovulate. Induces ovarian granulosa cell apoptosis, possibly via apoptotic signaling pathway involving CASP8 and CASP3 activation, and poly(ADP-ribose) polymerase (PARP) cleavage. Has no hyaluronidase activity in embryonic fibroblasts in vitro. Has no hyaluronidase activity in granulosa cells in vitro. This chain is Hyaluronidase-3 (Hyal3), found in Rattus norvegicus (Rat).